Here is a 789-residue protein sequence, read N- to C-terminus: Bifunctional purine biosynthetic protein PUR2,5 (789 aa).

Residues 1–428 are GARS; that stretch reads MEKINVLVVG…NRTDIAHRAF (428 aa). The 208-residue stretch at 114-321 folds into the ATP-grasp domain; the sequence is KDFMKKHNIP…LLELMLATVE (208 aa). 140-201 serves as a coordination point for ATP; sequence IANSSHNLVI…EEFLEGDELS (62 aa). Mg(2+) is bound by residues Glu291 and Asn293. The segment at 438–773 is AIRS; that stretch reads LTYEDAGVSV…TVYTIGKLVE (336 aa).

It in the N-terminal section; belongs to the GARS family. The protein in the C-terminal section; belongs to the AIR synthase family. Mg(2+) serves as cofactor. The cofactor is Mn(2+).

The protein localises to the cytoplasm. It localises to the cytosol. The enzyme catalyses 2-formamido-N(1)-(5-O-phospho-beta-D-ribosyl)acetamidine + ATP = 5-amino-1-(5-phospho-beta-D-ribosyl)imidazole + ADP + phosphate + H(+). It carries out the reaction 5-phospho-beta-D-ribosylamine + glycine + ATP = N(1)-(5-phospho-beta-D-ribosyl)glycinamide + ADP + phosphate + H(+). It functions in the pathway purine metabolism; IMP biosynthesis via de novo pathway; 5-amino-1-(5-phospho-D-ribosyl)imidazole from N(2)-formyl-N(1)-(5-phospho-D-ribosyl)glycinamide: step 2/2. Its pathway is purine metabolism; IMP biosynthesis via de novo pathway; N(1)-(5-phospho-D-ribosyl)glycinamide from 5-phospho-alpha-D-ribose 1-diphosphate: step 2/2. Functionally, catalyzes the second and fifth step in the 'de novo' purine biosynthesis pathway; contains phosphoribosylamine--glycine ligase (GARS) and phosphoribosylformylglycinamidine cyclo-ligase (AIRS) activities. This Pichia angusta (Yeast) protein is Bifunctional purine biosynthetic protein PUR2,5.